A 78-amino-acid chain; its full sequence is Acyl carrier protein (78 aa).

Positions 2 to 77 (STIEERVKKI…EAIDYINAHA (76 aa)) constitute a Carrier domain. Residue Ser37 is modified to O-(pantetheine 4'-phosphoryl)serine.

This sequence belongs to the acyl carrier protein (ACP) family. In terms of processing, 4'-phosphopantetheine is transferred from CoA to a specific serine of apo-ACP by AcpS. This modification is essential for activity because fatty acids are bound in thioester linkage to the sulfhydryl of the prosthetic group.

Its subcellular location is the cytoplasm. Its pathway is lipid metabolism; fatty acid biosynthesis. Its function is as follows. Carrier of the growing fatty acid chain in fatty acid biosynthesis. This chain is Acyl carrier protein, found in Stutzerimonas stutzeri (strain A1501) (Pseudomonas stutzeri).